Reading from the N-terminus, the 320-residue chain is Coproporphyrin III ferrochelatase (320 aa).

Residues His194 and Glu273 each contribute to the Fe(2+) site.

This sequence belongs to the ferrochelatase family.

Its subcellular location is the cytoplasm. It carries out the reaction Fe-coproporphyrin III + 2 H(+) = coproporphyrin III + Fe(2+). Its pathway is porphyrin-containing compound metabolism; protoheme biosynthesis. Involved in coproporphyrin-dependent heme b biosynthesis. Catalyzes the insertion of ferrous iron into coproporphyrin III to form Fe-coproporphyrin III. This chain is Coproporphyrin III ferrochelatase, found in Symbiobacterium thermophilum (strain DSM 24528 / JCM 14929 / IAM 14863 / T).